The following is a 90-amino-acid chain: Probable Fe(2+)-trafficking protein (90 aa).

This sequence belongs to the Fe(2+)-trafficking protein family. Monomer.

Could be a mediator in iron transactions between iron acquisition and iron-requiring processes, such as synthesis and/or repair of Fe-S clusters in biosynthetic enzymes. The chain is Probable Fe(2+)-trafficking protein from Yersinia pestis bv. Antiqua (strain Antiqua).